The sequence spans 194 residues: ATP-dependent Clp protease proteolytic subunit (194 aa).

The active-site Nucleophile is S97. H122 is an active-site residue.

The protein belongs to the peptidase S14 family. Fourteen ClpP subunits assemble into 2 heptameric rings which stack back to back to give a disk-like structure with a central cavity, resembling the structure of eukaryotic proteasomes.

Its subcellular location is the cytoplasm. The enzyme catalyses Hydrolysis of proteins to small peptides in the presence of ATP and magnesium. alpha-casein is the usual test substrate. In the absence of ATP, only oligopeptides shorter than five residues are hydrolyzed (such as succinyl-Leu-Tyr-|-NHMec, and Leu-Tyr-Leu-|-Tyr-Trp, in which cleavage of the -Tyr-|-Leu- and -Tyr-|-Trp bonds also occurs).. Its function is as follows. Cleaves peptides in various proteins in a process that requires ATP hydrolysis. Has a chymotrypsin-like activity. Plays a major role in the degradation of misfolded proteins. This is ATP-dependent Clp protease proteolytic subunit from Carsonella ruddii (strain PV).